A 419-amino-acid chain; its full sequence is L-rhamnose isomerase (419 aa).

Mn(2+) is bound by residues His262, Asp294, and Asp296.

The protein belongs to the rhamnose isomerase family. In terms of assembly, homotetramer. It depends on Mn(2+) as a cofactor.

The protein localises to the cytoplasm. The enzyme catalyses L-rhamnopyranose = L-rhamnulose. The protein operates within carbohydrate degradation; L-rhamnose degradation; glycerone phosphate from L-rhamnose: step 1/3. Catalyzes the interconversion of L-rhamnose and L-rhamnulose. The protein is L-rhamnose isomerase of Salmonella paratyphi A (strain AKU_12601).